The sequence spans 345 residues: Dihydroorotate dehydrogenase (quinone) (345 aa).

FMN contacts are provided by residues 65 to 69 (AGLDK) and Thr89. Lys69 contacts substrate. Position 114–118 (114–118 (NRMGF)) interacts with substrate. Positions 142 and 175 each coordinate FMN. Residue Asn175 participates in substrate binding. The active-site Nucleophile is Ser178. Asn180 is a binding site for substrate. FMN-binding residues include Lys220 and Thr248. Residue 249–250 (NT) coordinates substrate. FMN contacts are provided by residues Gly271, Gly300, and 321-322 (YT).

It belongs to the dihydroorotate dehydrogenase family. Type 2 subfamily. In terms of assembly, monomer. Requires FMN as cofactor.

The protein resides in the cell membrane. It carries out the reaction (S)-dihydroorotate + a quinone = orotate + a quinol. The protein operates within pyrimidine metabolism; UMP biosynthesis via de novo pathway; orotate from (S)-dihydroorotate (quinone route): step 1/1. Its function is as follows. Catalyzes the conversion of dihydroorotate to orotate with quinone as electron acceptor. This chain is Dihydroorotate dehydrogenase (quinone), found in Burkholderia ambifaria (strain ATCC BAA-244 / DSM 16087 / CCUG 44356 / LMG 19182 / AMMD) (Burkholderia cepacia (strain AMMD)).